The primary structure comprises 1059 residues: Microtubule-associated protein 1S (1059 aa).

The segment at methionine 1–serine 797 is necessary for the microtubule-organizing center localization. Phosphoserine occurs at positions 321 and 472. Disordered stretches follow at residues proline 461–histidine 733 and valine 751–proline 942. Basic and acidic residues-rich tracts occupy residues glycine 466–glycine 486 and proline 494–lysine 530. Residues serine 547 to glutamine 557 are compositionally biased toward polar residues. Position 582 is a phosphoserine (serine 582). Residues alanine 591–serine 603 show a composition bias toward low complexity. Residue threonine 638 is modified to Phosphothreonine. Serine 640 is subject to Phosphoserine. Positions glutamate 642–glutamate 652 are enriched in basic and acidic residues. Serine 655 and serine 657 each carry phosphoserine. The tract at residues proline 666 to phenylalanine 1059 is necessary for interaction with RASSF1 isoform A and isoform C. The segment covering proline 670–proline 680 has biased composition (low complexity). The interval glutamate 714–glutamate 966 is necessary for association with microtubules. 2 positions are modified to phosphoserine: serine 731 and serine 759. Residues serine 759–arginine 769 show a composition bias toward low complexity. Residues proline 783 to aspartate 796 are compositionally biased toward polar residues. Serine 809 carries the phosphoserine modification. Pro residues predominate over residues proline 825 to aspartate 836. Composition is skewed to low complexity over residues alanine 873–lysine 887 and threonine 923–proline 936. Residues alanine 960–phenylalanine 1059 are necessary for association with actin. The necessary for the mitochondrial aggregation and genome destruction stretch occupies residues phenylalanine 967–alanine 991.

The protein belongs to the MAP1 family. As to quaternary structure, heterodimer of a heavy and a light chain. Interacts with microtubules and actin. Both MAP1S heavy and light chains interact with microtubules. MAP1S light chain interacts with actin. Interacts (via C-terminus) with GAN (via Kelch domains). Interacts with ESR1, LRPPRC, RASSF1 isoform A and isoform C, microtubules and VCY2. Interacts with WDR47 (via N-terminus of light chain). Expressed in neurons (at protein level). Expressed in spermatocytes, spermatids and spermatozoa. Expressed in the cerebral cortex. Highly expressed in testis. Moderately expressed in the brain, colon, heart, kidney, liver, lung, placenta, small intestine, spleen and stomach. Weakly expressed in muscle.

The protein resides in the nucleus. The protein localises to the cytoplasm. It localises to the cytosol. Its subcellular location is the cytoskeleton. It is found in the spindle. Functionally, microtubule-associated protein that mediates aggregation of mitochondria resulting in cell death and genomic destruction (MAGD). Plays a role in anchoring the microtubule organizing center to the centrosomes. Binds to DNA. Plays a role in apoptosis. Involved in the formation of microtubule bundles. The chain is Microtubule-associated protein 1S (MAP1S) from Homo sapiens (Human).